The primary structure comprises 126 residues: Holo-[acyl-carrier-protein] synthase (126 aa).

Positions 9 and 58 each coordinate Mg(2+).

It belongs to the P-Pant transferase superfamily. AcpS family. The cofactor is Mg(2+).

The protein resides in the cytoplasm. The catalysed reaction is apo-[ACP] + CoA = holo-[ACP] + adenosine 3',5'-bisphosphate + H(+). Transfers the 4'-phosphopantetheine moiety from coenzyme A to a Ser of acyl-carrier-protein. This chain is Holo-[acyl-carrier-protein] synthase, found in Yersinia enterocolitica serotype O:8 / biotype 1B (strain NCTC 13174 / 8081).